Here is a 476-residue protein sequence, read N- to C-terminus: Aspartyl/glutamyl-tRNA(Asn/Gln) amidotransferase subunit B (476 aa).

The protein belongs to the GatB/GatE family. GatB subfamily. Heterotrimer of A, B and C subunits.

It catalyses the reaction L-glutamyl-tRNA(Gln) + L-glutamine + ATP + H2O = L-glutaminyl-tRNA(Gln) + L-glutamate + ADP + phosphate + H(+). The catalysed reaction is L-aspartyl-tRNA(Asn) + L-glutamine + ATP + H2O = L-asparaginyl-tRNA(Asn) + L-glutamate + ADP + phosphate + 2 H(+). Allows the formation of correctly charged Asn-tRNA(Asn) or Gln-tRNA(Gln) through the transamidation of misacylated Asp-tRNA(Asn) or Glu-tRNA(Gln) in organisms which lack either or both of asparaginyl-tRNA or glutaminyl-tRNA synthetases. The reaction takes place in the presence of glutamine and ATP through an activated phospho-Asp-tRNA(Asn) or phospho-Glu-tRNA(Gln). In Listeria monocytogenes serotype 4b (strain CLIP80459), this protein is Aspartyl/glutamyl-tRNA(Asn/Gln) amidotransferase subunit B.